The chain runs to 304 residues: Glutaminase (304 aa).

Residues Ser63, Asn114, Glu158, Asn165, Tyr189, Tyr240, and Val258 each contribute to the substrate site.

This sequence belongs to the glutaminase family. Homotetramer.

The catalysed reaction is L-glutamine + H2O = L-glutamate + NH4(+). The chain is Glutaminase from Shewanella baltica (strain OS195).